A 538-amino-acid chain; its full sequence is Phosphoenolpyruvate carboxykinase (ATP) (538 aa).

Substrate is bound by residues Arg64, Tyr205, and Lys211. ATP-binding positions include Lys211, His230, and 246-254 (GLSGTGKTT). Positions 211 and 230 each coordinate Mn(2+). Residue Asp267 coordinates Mn(2+). Residues Glu295, Arg331, 447 to 448 (RI), and Thr453 contribute to the ATP site. Position 331 (Arg331) interacts with substrate.

The protein belongs to the phosphoenolpyruvate carboxykinase (ATP) family. In terms of assembly, monomer. Mn(2+) serves as cofactor.

The protein localises to the cytoplasm. The catalysed reaction is oxaloacetate + ATP = phosphoenolpyruvate + ADP + CO2. The protein operates within carbohydrate biosynthesis; gluconeogenesis. Involved in the gluconeogenesis. Catalyzes the conversion of oxaloacetate (OAA) to phosphoenolpyruvate (PEP) through direct phosphoryl transfer between the nucleoside triphosphate and OAA. The chain is Phosphoenolpyruvate carboxykinase (ATP) from Histophilus somni (strain 129Pt) (Haemophilus somnus).